The following is a 411-amino-acid chain: MNALAATSRNFKQAAKLLGLDSKLEKSLLIPFREIKVECTIPKDDGTLASYVGFRVQHDNARGPMKGGIRYHHEVDPDEVNALAQLMTWKTAVANIPYGGAKGGIGCSPGDLSISELERLTRVFTQKIHDLIGIHTDVPAPDMGTNSQTMAWILDEYSKFHGYSPAVVTGKPVDLGGSLGRDAATGRGVLFATEALLAEHGKGIAGQRFVIQGFGNVGSWAAQLISEAGGKVIAISDVTGAVKNSNGLDIAKLMKHSSENRGIKGFDGGDAIDPRSLLTEECDVLIPAALGGVINKDNANEIKAKYIIEAANHPTDPEADEILSKKGVLILPDILANSGGVTVSYFEWVQNIQGFMWDEEKVNNELKTYMTRGFRDVKEMCRSHHCDLRMGAFTLGVNRVARATVLRGWEA.

A mitochondrion-targeting transit peptide spans 1–18 (MNALAATSRNFKQAAKLL). The active site involves Lys-102.

It belongs to the Glu/Leu/Phe/Val dehydrogenases family.

Its subcellular location is the mitochondrion. It catalyses the reaction L-glutamate + NAD(+) + H2O = 2-oxoglutarate + NH4(+) + NADH + H(+). The catalysed reaction is L-glutamate + NADP(+) + H2O = 2-oxoglutarate + NH4(+) + NADPH + H(+). The sequence is that of Glutamate dehydrogenase 1, mitochondrial (GDH1) from Oryza sativa subsp. indica (Rice).